The sequence spans 106 residues: UPF0145 protein Daci_3728 (106 aa).

The protein belongs to the UPF0145 family.

This is UPF0145 protein Daci_3728 from Delftia acidovorans (strain DSM 14801 / SPH-1).